We begin with the raw amino-acid sequence, 302 residues long: Succinate--CoA ligase [ADP-forming] subunit alpha (302 aa).

CoA is bound by residues 17-20 (TGST), Lys43, and 96-98 (ITE). Tyr159 serves as a coordination point for substrate. The active-site Tele-phosphohistidine intermediate is His247.

It belongs to the succinate/malate CoA ligase alpha subunit family. In terms of assembly, heterotetramer of two alpha and two beta subunits.

The catalysed reaction is succinate + ATP + CoA = succinyl-CoA + ADP + phosphate. The enzyme catalyses GTP + succinate + CoA = succinyl-CoA + GDP + phosphate. The protein operates within carbohydrate metabolism; tricarboxylic acid cycle; succinate from succinyl-CoA (ligase route): step 1/1. Functionally, succinyl-CoA synthetase functions in the citric acid cycle (TCA), coupling the hydrolysis of succinyl-CoA to the synthesis of either ATP or GTP and thus represents the only step of substrate-level phosphorylation in the TCA. The alpha subunit of the enzyme binds the substrates coenzyme A and phosphate, while succinate binding and nucleotide specificity is provided by the beta subunit. The protein is Succinate--CoA ligase [ADP-forming] subunit alpha of Staphylococcus epidermidis (strain ATCC 12228 / FDA PCI 1200).